The primary structure comprises 359 residues: Nicotinate-nucleotide--dimethylbenzimidazole phosphoribosyltransferase (359 aa).

Glutamate 318 functions as the Proton acceptor in the catalytic mechanism.

Belongs to the CobT family. As to quaternary structure, homodimer.

The catalysed reaction is 5,6-dimethylbenzimidazole + nicotinate beta-D-ribonucleotide = alpha-ribazole 5'-phosphate + nicotinate + H(+). The protein operates within nucleoside biosynthesis; alpha-ribazole biosynthesis; alpha-ribazole from 5,6-dimethylbenzimidazole: step 1/2. In terms of biological role, catalyzes the synthesis of alpha-ribazole-5'-phosphate from nicotinate mononucleotide (NAMN) and 5,6-dimethylbenzimidazole (DMB). This is Nicotinate-nucleotide--dimethylbenzimidazole phosphoribosyltransferase from Escherichia coli (strain SMS-3-5 / SECEC).